Consider the following 530-residue polypeptide: MGSESLETLQVILSGGEFMLHTSVWLVPGSLLSSHPVFTFKVKQENNGPTFWRRKVSRTLNESSLRSQQESSTPFKDPTSHPSDLKELSPAGQGTSRPLPTLSSCQSMAATDMPVCSLSLASSTNEPQELPDPRDAPREGSFRLDGNQSEFGLGNSLPASPLHSCRNLEKEESELHLYIISATSSIFLHLKSSWNNYIIRATLLQDPLCASEHNDVIGKPKPYRSEEKIKHFCQLKSELFLKDNTLRKILCLITELRVAAQRNFILKRLFWKTSELFYFLVNKLHEYLPESRDKHALQNKSQRADELMACIEIIQTLGLMFRETEIESSRLNTLAAKKGTLFNLLVILISKPKVPKSCSKSDAQPVADPTSAEVFFDSQLQKLTLEYTDTATALLYEILLIFQQGNLGLGSTKFAISWMMSFLQSCPPIMAFVARIVEGVVRGLSASFQLLTPCQAVLLYQQFYILRSCLQHSKALAEYIRNDHREEFRYFIHMPALEQRLPGCYPITEPTTQLCHEVLQLIEQKQCAKC.

2 stretches are compositionally biased toward polar residues: residues Leu60–Pro74 and Gly92–Ser103. 2 disordered regions span residues Leu60–Ser103 and Ala121–Asn155. Over residues Pro131–Phe142 the composition is skewed to basic and acidic residues.

This is an uncharacterized protein from Mus musculus (Mouse).